A 398-amino-acid chain; its full sequence is S-adenosylmethionine synthase (398 aa).

ATP is bound at residue 136–141; it reads GTGSSD.

This sequence belongs to the AdoMet synthase 2 family. The cofactor is Mg(2+).

It catalyses the reaction L-methionine + ATP + H2O = S-adenosyl-L-methionine + phosphate + diphosphate. It participates in amino-acid biosynthesis; S-adenosyl-L-methionine biosynthesis; S-adenosyl-L-methionine from L-methionine: step 1/1. In terms of biological role, catalyzes the formation of S-adenosylmethionine from methionine and ATP. The polypeptide is S-adenosylmethionine synthase (Methanosarcina mazei (strain ATCC BAA-159 / DSM 3647 / Goe1 / Go1 / JCM 11833 / OCM 88) (Methanosarcina frisia)).